A 631-amino-acid polypeptide reads, in one-letter code: Phosphomethylpyrimidine synthase (631 aa).

Substrate is bound by residues Asn239, Met268, Tyr297, His333, 353 to 355 (SRG), 394 to 397 (DGLR), and Glu433. His437 is a binding site for Zn(2+). Tyr460 lines the substrate pocket. His501 serves as a coordination point for Zn(2+). [4Fe-4S] cluster is bound by residues Cys581, Cys584, and Cys589.

The protein belongs to the ThiC family. As to quaternary structure, homodimer. The cofactor is [4Fe-4S] cluster.

It catalyses the reaction 5-amino-1-(5-phospho-beta-D-ribosyl)imidazole + S-adenosyl-L-methionine = 4-amino-2-methyl-5-(phosphooxymethyl)pyrimidine + CO + 5'-deoxyadenosine + formate + L-methionine + 3 H(+). It participates in cofactor biosynthesis; thiamine diphosphate biosynthesis. In terms of biological role, catalyzes the synthesis of the hydroxymethylpyrimidine phosphate (HMP-P) moiety of thiamine from aminoimidazole ribotide (AIR) in a radical S-adenosyl-L-methionine (SAM)-dependent reaction. The sequence is that of Phosphomethylpyrimidine synthase from Shigella boydii serotype 4 (strain Sb227).